Reading from the N-terminus, the 856-residue chain is Envelope glycoprotein gp160 (856 aa).

A signal peptide spans 1–32 (MRVKEKYQHLWRWGWRWGTMLLGMLMICSATE). Residues 33-684 (KLWVTVYYGV…ITNWLWYIKL (652 aa)) are Extracellular-facing. The cysteines at positions 54 and 74 are disulfide-linked. N-linked (GlcNAc...) asparagine; by host glycans are attached at residues Asn88, Asn136, Asn141, Asn156, Asn160, Asn186, Asn197, Asn230, Asn234, Asn241, Asn262, Asn276, Asn289, Asn295, Asn301, Asn332, Asn339, and Asn356. Cystine bridges form between Cys119–Cys205, Cys126–Cys196, Cys131–Cys157, Cys218–Cys247, and Cys228–Cys239. A V1 region spans residues 131 to 156 (CTDLKNDTNTNSSSGRMIMEKGEIKN). The tract at residues 157–196 (CSFNISTSIRGKVQKEYAFFYKLDIIPIDNDTTSYKLTSC) is V2. A V3 region spans residues 296-330 (CTRPNNNTRKRIRIQRGPGRAFVTIGKIGNMRQAH). Cysteines 296 and 331 form a disulfide. The CD4-binding loop stretch occupies residues 364 to 374 (SSGGDPEIVTH). 2 disulfide bridges follow: Cys378–Cys445 and Cys385–Cys418. Residues 385 to 418 (CNSTQLFNSTWFNSTWSTEGSNNTEGSDTITLPC) form a V4 region. N-linked (GlcNAc...) asparagine; by host glycosylation is found at Asn386, Asn392, Asn397, Asn406, Asn448, and Asn463. 2 V5 regions span residues 461–471 (SNNESEIFRPG) and 463–471 (NESEIFRPG). The fusion peptide stretch occupies residues 512-532 (AVGIGALFLGFLGAAGSTMGA). The tract at residues 574–592 (KQLQARILAVERYLKDQQL) is immunosuppression. Cys598 and Cys604 are oxidised to a cystine. Asn611, Asn616, Asn624, Asn637, and Asn674 each carry an N-linked (GlcNAc...) asparagine; by host glycan. Residues 633–667 (REINNYTSLIHSLIEESQNQQEKNEQELLELDKWA) adopt a coiled-coil conformation. An MPER; binding to GalCer region spans residues 662-683 (ELDKWASLWNWFNITNWLWYIK). The helical transmembrane segment at 685-705 (FIMIVGGLVGLRIVFAVLSIV) threads the bilayer. Residues 706–856 (NRVRQGYSPL…IRQGLERILL (151 aa)) are Cytoplasmic-facing. The YXXL motif; contains endocytosis signal signature appears at 712-715 (YSPL). Positions 718 to 742 (QTHLPTPRGPDRPEGIEEEGGERDR) are disordered. S-palmitoyl cysteine; by host attachment occurs at residues Cys764 and Cys837. The short motif at 855–856 (LL) is the Di-leucine internalization motif element.

The protein belongs to the HIV-1 env protein family. In terms of assembly, the mature envelope protein (Env) consists of a homotrimer of non-covalently associated gp120-gp41 heterodimers. The resulting complex protrudes from the virus surface as a spike. There seems to be as few as 10 spikes on the average virion. Interacts with host CD4, CCR5 and CXCR4. Gp120 also interacts with the C-type lectins CD209/DC-SIGN and CLEC4M/DC-SIGNR (collectively referred to as DC-SIGN(R)). Gp120 and gp41 interact with GalCer. Gp120 interacts with host ITGA4/ITGB7 complex; on CD4+ T-cells, this interaction results in rapid activation of integrin ITGAL/LFA-1, which facilitates efficient cell-to-cell spreading of HIV-1. Gp120 interacts with cell-associated heparan sulfate; this interaction increases virus infectivity on permissive cells and may be involved in infection of CD4- cells. As to quaternary structure, the mature envelope protein (Env) consists of a homotrimer of non-covalently associated gp120-gp41 heterodimers. The resulting complex protrudes from the virus surface as a spike. There seems to be as few as 10 spikes on the average virion. In terms of processing, palmitoylation of the transmembrane protein and of Env polyprotein (prior to its proteolytic cleavage) is essential for their association with host cell membrane lipid rafts. Palmitoylation is therefore required for envelope trafficking to classical lipid rafts, but not for viral replication. Post-translationally, highly glycosylated by host. The high number of glycan on the protein is reffered to as 'glycan shield' because it contributes to hide protein sequence from adaptive immune system. Specific enzymatic cleavages in vivo yield mature proteins. Envelope glycoproteins are synthesized as an inactive precursor that is heavily N-glycosylated and processed likely by host cell furin in the Golgi to yield the mature SU and TM proteins. The cleavage site between SU and TM requires the minimal sequence [KR]-X-[KR]-R. About 2 of the 9 disulfide bonds of gp41 are reduced by P4HB/PDI, following binding to CD4 receptor.

The protein localises to the virion membrane. It is found in the host cell membrane. The protein resides in the host endosome membrane. In terms of biological role, oligomerizes in the host endoplasmic reticulum into predominantly trimers. In a second time, gp160 transits in the host Golgi, where glycosylation is completed. The precursor is then proteolytically cleaved in the trans-Golgi and thereby activated by cellular furin or furin-like proteases to produce gp120 and gp41. Attaches the virus to the host lymphoid cell by binding to the primary receptor CD4. This interaction induces a structural rearrangement creating a high affinity binding site for a chemokine coreceptor like CXCR4 and/or CCR5. Acts as a ligand for CD209/DC-SIGN and CLEC4M/DC-SIGNR, which are respectively found on dendritic cells (DCs), and on endothelial cells of liver sinusoids and lymph node sinuses. These interactions allow capture of viral particles at mucosal surfaces by these cells and subsequent transmission to permissive cells. HIV subverts the migration properties of dendritic cells to gain access to CD4+ T-cells in lymph nodes. Virus transmission to permissive T-cells occurs either in trans (without DCs infection, through viral capture and transmission), or in cis (following DCs productive infection, through the usual CD4-gp120 interaction), thereby inducing a robust infection. In trans infection, bound virions remain infectious over days and it is proposed that they are not degraded, but protected in non-lysosomal acidic organelles within the DCs close to the cell membrane thus contributing to the viral infectious potential during DCs' migration from the periphery to the lymphoid tissues. On arrival at lymphoid tissues, intact virions recycle back to DCs' cell surface allowing virus transmission to CD4+ T-cells. Functionally, acts as a class I viral fusion protein. Under the current model, the protein has at least 3 conformational states: pre-fusion native state, pre-hairpin intermediate state, and post-fusion hairpin state. During fusion of viral and target intracellular membranes, the coiled coil regions (heptad repeats) assume a trimer-of-hairpins structure, positioning the fusion peptide in close proximity to the C-terminal region of the ectodomain. The formation of this structure appears to drive apposition and subsequent fusion of viral and target cell membranes. Complete fusion occurs in host cell endosomes and is dynamin-dependent, however some lipid transfer might occur at the plasma membrane. The virus undergoes clathrin-dependent internalization long before endosomal fusion, thus minimizing the surface exposure of conserved viral epitopes during fusion and reducing the efficacy of inhibitors targeting these epitopes. Membranes fusion leads to delivery of the nucleocapsid into the cytoplasm. The sequence is that of Envelope glycoprotein gp160 from Homo sapiens (Human).